A 954-amino-acid chain; its full sequence is Centrosomal protein of 112 kDa (954 aa).

Positions 276-954 form a coiled coil; sequence QKHDAEVQKI…EELTTYQSRR (679 aa).

The protein resides in the cytoplasm. Its subcellular location is the cytoskeleton. The protein localises to the microtubule organizing center. It is found in the centrosome. The chain is Centrosomal protein of 112 kDa (Cep112) from Mus musculus (Mouse).